A 385-amino-acid chain; its full sequence is Transcription factor-like protein DPB (385 aa).

2 disordered regions span residues 1-53 and 71-102; these read MTTT…EQTI and DIQG…KTGR. Residues 22-31 are compositionally biased toward polar residues; sequence PSTRSWGTAV. Low complexity predominate over residues 32-53; sequence SGQSVSTSGSMGSPSSRSEQTI. The DNA-binding element occupies 101-184; the sequence is GRGLRQFSMK…KKEIQWRGLP (84 aa). The short motif at 150 to 184 is the DEF box element; sequence DEKNIRRRVYDALNVLMAMDIISKDKKEIQWRGLP. Residues 185–234 adopt a coiled-coil conformation; the sequence is RTSLSDIEELKNERLSLRNRIEKKTAYSQELEEQYVGLQNLIQRNEHLYS. Positions 296 to 385 are disordered; that stretch reads PPQQPNGRNN…IMNSSMKPEN (90 aa). A compositionally biased stretch (polar residues) spans 300–327; it reads PNGRNNSQLVCHNFTPENPNKGPSTGPT. A compositionally biased stretch (low complexity) spans 336-349; it reads HLQSQQHQQHSQLQ. Residues 355-364 are compositionally biased toward polar residues; sequence ETNNVTSSAD.

It belongs to the E2F/DP family. As to quaternary structure, heterodimer with non-phosphorylated E2FC. No interaction with phosphorylated E2FC. Interacts preferentially with E2FC, but also with E2FA and E2FB. Interacts with SKP2A. Targeted for proteasomal degradation by the SCF(SKP2A) E3 ubiquitin ligase complex. In terms of processing, phosphorylated. Ubiquitous.

The protein resides in the nucleus. It is found in the cytoplasm. In terms of biological role, involved in the regulation of the G1/S transition. Increases the DNA binding activity of E2F proteins after heterodimerization. The complex DPB/E2FC restricts cell division and lateral root initiation and may function as a negative regulator of E2F-regulated genes. The interaction with SKP2A is controlled by auxin. This chain is Transcription factor-like protein DPB (DPB), found in Arabidopsis thaliana (Mouse-ear cress).